A 126-amino-acid polypeptide reads, in one-letter code: DNA-directed RNA polymerase I subunit RPA12 (126 aa).

Residues Cys20, Cys23, Cys38, Cys41, Cys87, and Cys90 each contribute to the Zn(2+) site. The segment at 20 to 41 (CSDCGSVLPLPGAQDTVTCTRC) adopts a C4-type zinc-finger fold. The TFIIS-type zinc finger occupies 83–123 (VDRRCPRCGHEGMAYHTRQMRSADEGQTVFYTCTNCKFQEK). A Hairpin motif is present at residues 106 to 107 (DE). The Zn(2+) site is built by Cys115 and Cys118.

Belongs to the archaeal RpoM/eukaryotic RPA12/RPB9/RPC11 RNA polymerase family. In terms of assembly, component of the RNA polymerase I (Pol I) complex consisting of 13 subunits: a ten-subunit catalytic core composed of POLR1A/RPA1, POLR1B/RPA2, POLR1C/RPAC1, POLR1D/RPAC2, POLR1H/RPA12, POLR2E/RPABC1, POLR2F/RPABC2, POLR2H/RPABC3, POLR2K/RPABC4 and POLR2L/RPABC5; a mobile stalk subunit POLR1F/RPA43 protruding from the core and additional subunits homologous to general transcription factors POLR1E/RPA49 and POLR1G/RPA34. Part of Pol I pre-initiation complex (PIC), in which Pol I core assembles with RRN3 and promoter-bound UTBF and SL1/TIF-IB complex.

It localises to the nucleus. It is found in the nucleolus. Functionally, core component of RNA polymerase I (Pol I), a DNA-dependent RNA polymerase which synthesizes ribosomal RNA precursors using the four ribonucleoside triphosphates as substrates. Can mediate Pol I proofreading of the nascent RNA transcript. Anchors into the Pol I active site to monitor transcription fidelity and cleave mis-incorporated 5'-ribonucleotides. This Macaca mulatta (Rhesus macaque) protein is DNA-directed RNA polymerase I subunit RPA12.